A 434-amino-acid polypeptide reads, in one-letter code: Methylenetetrahydrofolate--tRNA-(uracil-5-)-methyltransferase TrmFO (434 aa).

10-15 (GAGLAG) contacts FAD.

This sequence belongs to the MnmG family. TrmFO subfamily. Requires FAD as cofactor.

The protein resides in the cytoplasm. It catalyses the reaction uridine(54) in tRNA + (6R)-5,10-methylene-5,6,7,8-tetrahydrofolate + NADH + H(+) = 5-methyluridine(54) in tRNA + (6S)-5,6,7,8-tetrahydrofolate + NAD(+). It carries out the reaction uridine(54) in tRNA + (6R)-5,10-methylene-5,6,7,8-tetrahydrofolate + NADPH + H(+) = 5-methyluridine(54) in tRNA + (6S)-5,6,7,8-tetrahydrofolate + NADP(+). Catalyzes the folate-dependent formation of 5-methyl-uridine at position 54 (M-5-U54) in all tRNAs. The protein is Methylenetetrahydrofolate--tRNA-(uracil-5-)-methyltransferase TrmFO of Bacillus cereus (strain AH820).